The sequence spans 133 residues: Brain natriuretic peptide (133 aa).

An N-terminal signal peptide occupies residues 1 to 22; it reads MVVSFVSICGLLLIFNLPLSTS. A compositionally biased stretch (acidic residues) spans 44–53; that stretch reads SMSEETEEDQ. Disordered stretches follow at residues 44-76 and 93-112; these read SMSE…NRDQ and TRKN…FGRR. An intrachain disulfide couples C108 to C124.

This sequence belongs to the natriuretic peptide family.

It is found in the secreted. In terms of biological role, cardiac hormone which may function as a paracrine antifibrotic factor in the heart. Also plays a key role in cardiovascular homeostasis through natriuresis, diuresis, vasorelaxation, and inhibition of renin and aldosterone secretion. Has a cGMP-stimulating activity. This is Brain natriuretic peptide (nppb) from Takifugu rubripes (Japanese pufferfish).